The chain runs to 307 residues: tRNA dimethylallyltransferase 2 (307 aa).

9-16 contacts ATP; sequence GPTAVGKT. A substrate-binding site is contributed by 11 to 16; sequence TAVGKT. Residues 34 to 37 are interaction with substrate tRNA; it reads DSRQ.

It belongs to the IPP transferase family. Monomer. The cofactor is Mg(2+).

The enzyme catalyses adenosine(37) in tRNA + dimethylallyl diphosphate = N(6)-dimethylallyladenosine(37) in tRNA + diphosphate. Its function is as follows. Catalyzes the transfer of a dimethylallyl group onto the adenine at position 37 in tRNAs that read codons beginning with uridine, leading to the formation of N6-(dimethylallyl)adenosine (i(6)A). This chain is tRNA dimethylallyltransferase 2, found in Azobacteroides pseudotrichonymphae genomovar. CFP2.